A 272-amino-acid polypeptide reads, in one-letter code: SWIRM domain-containing protein laf2 (272 aa).

The segment at 86–148 is disordered; the sequence is HVGRWANRHS…RRRKSARGNG (63 aa). Low complexity-rich tracts occupy residues 95–120 and 127–136; these read SNVSSSSGSRGRSSVSSRDSSPSYSG and RSISSSPSTI. Serine 130 and serine 132 each carry phosphoserine. The residue at position 135 (threonine 135) is a Phosphothreonine. An SWIRM domain is found at 182–272; that stretch reads LKAEWKGPPL…AFHEVGFFDD (91 aa).

As to quaternary structure, component of the RPD3C(L) complex.

It is found in the nucleus. Functionally, component of the RPD3C(L) histone deacetylase complex (HDAC) responsible for the deacetylation of lysine residues on the N-terminal part of the core histones (H2A, H2B, H3 and H4). Histone deacetylation gives a tag for epigenetic repression and plays an important role in transcriptional regulation, cell cycle progression and developmental events. This chain is SWIRM domain-containing protein laf2 (laf2), found in Schizosaccharomyces pombe (strain 972 / ATCC 24843) (Fission yeast).